The following is a 290-amino-acid chain: 4-hydroxybenzoate octaprenyltransferase (290 aa).

8 helical membrane passes run 23–43 (IGALLLLWPTLWALWVATPGM), 46–66 (LWILAVFVAGVWLMRAAGCVV), 99–119 (LFVVLVLLAFLLVLTLNAMTI), 141–161 (LPQVVLGAAFGWSIPMAFAAV), 163–183 (ESLPLSCWLMFLANILWAVAY), 212–232 (TLIIGILQLGVMALMALIGWL), 233–253 (NGLGGGYYWAVLVAGALFVYQ), and 268–288 (AFMNNNYVGLVLFLGLAMSYW).

Belongs to the UbiA prenyltransferase family. Requires Mg(2+) as cofactor.

The protein resides in the cell inner membrane. It carries out the reaction all-trans-octaprenyl diphosphate + 4-hydroxybenzoate = 4-hydroxy-3-(all-trans-octaprenyl)benzoate + diphosphate. Its pathway is cofactor biosynthesis; ubiquinone biosynthesis. Catalyzes the prenylation of para-hydroxybenzoate (PHB) with an all-trans polyprenyl group. Mediates the second step in the final reaction sequence of ubiquinone-8 (UQ-8) biosynthesis, which is the condensation of the polyisoprenoid side chain with PHB, generating the first membrane-bound Q intermediate 3-octaprenyl-4-hydroxybenzoate. This is 4-hydroxybenzoate octaprenyltransferase from Salmonella paratyphi C (strain RKS4594).